The primary structure comprises 712 residues: Polyribonucleotide nucleotidyltransferase (712 aa).

Mg(2+) is bound by residues D484 and D490. The region spanning 551 to 610 (PKVFTIQIHPDKIRDIIGPGGKVIRAIQAETGTRVDVDDSGLVKVSAVNLEEGEAALQMI) is the KH domain. An S1 motif domain is found at 620–688 (GAVYEGTVVK…KDGKIRLSRK (69 aa)). The tract at residues 689–712 (ALLEEENGKSGPENGAPQRDKNRH) is disordered.

This sequence belongs to the polyribonucleotide nucleotidyltransferase family. Requires Mg(2+) as cofactor.

It is found in the cytoplasm. It catalyses the reaction RNA(n+1) + phosphate = RNA(n) + a ribonucleoside 5'-diphosphate. Its function is as follows. Involved in mRNA degradation. Catalyzes the phosphorolysis of single-stranded polyribonucleotides processively in the 3'- to 5'-direction. This is Polyribonucleotide nucleotidyltransferase from Desulfatibacillum aliphaticivorans.